The primary structure comprises 2179 residues: Voltage-dependent L-type calcium channel subunit alpha-1D (2179 aa).

Disordered regions lie at residues Met1–Ala21, Thr30–Thr49, and Lys64–Ser100. Topologically, residues Met1–Lys126 are cytoplasmic. Over residues Gly38–Thr49 the composition is skewed to polar residues. Positions Gln82–Lys93 are enriched in basic residues. The stretch at Asn113–Phe409 is one I repeat. Residues Pro127–Ile145 form a helical membrane-spanning segment. Residues Tyr146–Lys163 are Extracellular-facing. A helical transmembrane segment spans residues Val164–Tyr183. At Gly184 to Asn195 the chain is on the cytoplasmic side. Residues Gly196–Leu214 form a helical membrane-spanning segment. Over Glu215–Asp235 the chain is Extracellular. The chain crosses the membrane as a helical span at residues Val236–Val254. Topologically, residues Pro255–His273 are cytoplasmic. Residues Ile274 to Phe293 traverse the membrane as a helical segment. Over Ile294–Trp381 the chain is Extracellular. Residue Glu364 coordinates Ca(2+). The chain crosses the membrane as a helical span at residues Pro382 to Ser406. Residues Gly407–Val543 are Cytoplasmic-facing. The binding to the beta subunit stretch occupies residues Gln429–Glu446. Residues Asp449–Ser480 form a disordered region. Polar residues predominate over residues Asn463 to Val479. The stretch at Asn529–Leu775 is one II repeat. Residues Thr544 to Glu563 traverse the membrane as a helical segment. At His564–Ala578 the chain is on the extracellular side. A helical transmembrane segment spans residues Asn579–Leu597. Topologically, residues Gly598–Ser605 are cytoplasmic. The helical transmembrane segment at Leu606 to Leu624 threads the bilayer. Topologically, residues Val625–Gly634 are extracellular. The helical transmembrane segment at Val635 to Trp653 threads the bilayer. At Thr654 to Ser672 the chain is on the cytoplasmic side. The chain crosses the membrane as a helical span at residues Leu673 to Gly693. At Gly694 to Ile747 the chain is on the extracellular side. Position 725 (Glu725) interacts with Ca(2+). Residues Val748–Val772 traverse the membrane as a helical segment. A coiled-coil region spans residues Ala771–Lys810. Over Asp773–His906 the chain is Cytoplasmic. Basic and acidic residues predominate over residues Lys786–Lys810. The interval Lys786 to Glu870 is disordered. Residues Pro811–Lys822 show a composition bias toward polar residues. The span at Val845–Glu858 shows a compositional bias: acidic residues. Residues Asn893 to Phe1175 form an III repeat. A helical membrane pass occupies residues Ile907–Ala925. Over Glu926–Tyr941 the chain is Extracellular. A helical transmembrane segment spans residues Phe942–Phe961. Topologically, residues Gly962–Asn973 are cytoplasmic. The helical transmembrane segment at Tyr974–Ile992 threads the bilayer. Over Gln993–Ser998 the chain is Extracellular. A helical membrane pass occupies residues Val999–Ala1018. Residues Lys1019–Asn1037 are Cytoplasmic-facing. A helical membrane pass occupies residues Ile1038–Phe1057. The Extracellular portion of the chain corresponds to Lys1058–Glu1147. The interval Arg1095–Asn1185 is dihydropyridine binding. Glu1121 is a binding site for Ca(2+). A helical transmembrane segment spans residues Ile1148–Val1168. The Cytoplasmic segment spans residues Gly1169–Ser1225. One copy of the IV repeat lies at Asn1212–Phe1487. The chain crosses the membrane as a helical span at residues Pro1226–Met1244. Residues Gln1245–Ile1259 are Extracellular-facing. Residues Leu1260 to Phe1279 form a helical membrane-spanning segment. Over Lys1280 to Ser1286 the chain is Cytoplasmic. A helical membrane pass occupies residues Asp1287–Glu1308. Topologically, residues Ala1309–Ile1333 are extracellular. Residues Ser1334–Gly1353 form a helical membrane-spanning segment. The Cytoplasmic portion of the chain corresponds to Glu1354 to Tyr1372. A helical transmembrane segment spans residues Val1373–Phe1392. Residues Gly1393 to Phe1459 lie on the Extracellular side of the membrane. Residues Leu1440–Lys1506 form a dihydropyridine binding region. The segment at Glu1452 to Ser1495 is phenylalkylamine binding. A helical transmembrane segment spans residues Ala1460 to Met1484. At Asp1485–Leu2179 the chain is on the cytoplasmic side. Disordered regions lie at residues Leu1704–Lys1789, Phe1896–Phe1941, and Gly2135–Asp2171. Positions Ser1764–Met1782 are enriched in polar residues. Positions Ser2156–Asp2171 are enriched in acidic residues.

The protein belongs to the calcium channel alpha-1 subunit (TC 1.A.1.11) family. CACNA1D subfamily. Voltage-dependent calcium channels are multisubunit complexes, consisting of alpha-1, alpha-2, beta and delta subunits in a 1:1:1:1 ratio. The channel activity is directed by the pore-forming and voltage-sensitive alpha-1 subunit. In many cases, this subunit is sufficient to generate voltage-sensitive calcium channel activity. The auxiliary subunits beta and alpha-2/delta linked by a disulfide bridge regulate the channel activity. Interacts (via IQ domain) with CABP1 and CABP4 in a calcium independent manner. Interacts with RIMBP2. Expressed in the inner hair cells (IHC) of the cochlea.

The protein localises to the membrane. It carries out the reaction Ca(2+)(in) = Ca(2+)(out). Its function is as follows. Voltage-sensitive calcium channels (VSCC) mediate the entry of calcium ions into excitable cells and are also involved in a variety of calcium-dependent processes, including muscle contraction, hormone or neurotransmitter release, gene expression, cell motility, cell division and cell death. The isoform alpha-1D gives rise to L-type calcium currents. Long-lasting (L-type) calcium channels belong to the 'high-voltage activated' (HVA) group. They are blocked by dihydropyridines (DHP), phenylalkylamines, and by benzothiazepines. The polypeptide is Voltage-dependent L-type calcium channel subunit alpha-1D (Cacna1d) (Mus musculus (Mouse)).